The chain runs to 226 residues: ATP synthase subunit a (226 aa).

A run of 5 helical transmembrane segments spans residues 18-38 (LSLN…TYWL), 74-94 (FVSL…PYIF), 100-120 (LTLT…YGWI), 162-182 (LTAN…TGPM), and 187-207 (IILS…SAVA).

This sequence belongs to the ATPase A chain family. F-type ATPases have 2 components, CF(1) - the catalytic core - and CF(0) - the membrane proton channel. CF(1) has five subunits: alpha(3), beta(3), gamma(1), delta(1), epsilon(1). CF(0) has three main subunits: a, b and c.

It is found in the mitochondrion inner membrane. Mitochondrial membrane ATP synthase (F(1)F(0) ATP synthase or Complex V) produces ATP from ADP in the presence of a proton gradient across the membrane which is generated by electron transport complexes of the respiratory chain. F-type ATPases consist of two structural domains, F(1) - containing the extramembraneous catalytic core and F(0) - containing the membrane proton channel, linked together by a central stalk and a peripheral stalk. During catalysis, ATP synthesis in the catalytic domain of F(1) is coupled via a rotary mechanism of the central stalk subunits to proton translocation. Key component of the proton channel; it may play a direct role in the translocation of protons across the membrane. The polypeptide is ATP synthase subunit a (Aedes aegypti (Yellowfever mosquito)).